The primary structure comprises 385 residues: ADP,ATP carrier protein 2, mitochondrial (385 aa).

The transit peptide at 1–74 (MVEQTQHPTI…ATTTSPVFVQ (74 aa)) directs the protein to the mitochondrion. 3 Solcar repeats span residues 82-175 (TNFA…FKRL), 187-280 (KWFA…VKPV), and 288-374 (DSFF…LQLI). The next 5 helical transmembrane spans lie at 84–111 (FAID…VKLL), 152–176 (TANV…KRLF), 185–205 (YWKW…SSLL), 256–277 (FNIS…YDSV), and 291–311 (FASF…SYPI). ADP contacts are provided by Arg-157 and Lys-169. Residue Arg-315 coordinates ADP. The important for transport activity stretch occupies residues 315-320 (RRRMMM). The Nucleotide carrier signature motif signature appears at 315–320 (RRRMMM). Residues 351–371 (AGANILRAVAGAGVLAGYDKL) traverse the membrane as a helical segment.

Belongs to the mitochondrial carrier (TC 2.A.29) family. As to quaternary structure, monomer.

Its subcellular location is the mitochondrion inner membrane. The catalysed reaction is ADP(in) + ATP(out) = ADP(out) + ATP(in). Its activity is regulated as follows. The matrix-open state (m-state) is inhibited by the membrane-permeable bongkrekic acid (BKA). The cytoplasmic-open state (c-state) is inhibited by the membrane-impermeable toxic inhibitor carboxyatractyloside (CATR). ADP:ATP antiporter that mediates import of ADP into the mitochondrial matrix for ATP synthesis, and export of ATP out to fuel the cell. Cycles between the cytoplasmic-open state (c-state) and the matrix-open state (m-state): operates by the alternating access mechanism with a single substrate-binding site intermittently exposed to either the cytosolic (c-state) or matrix (m-state) side of the inner mitochondrial membrane. The protein is ADP,ATP carrier protein 2, mitochondrial (AAC2) of Arabidopsis thaliana (Mouse-ear cress).